A 368-amino-acid polypeptide reads, in one-letter code: Aminomethyltransferase (368 aa).

This sequence belongs to the GcvT family. As to quaternary structure, the glycine cleavage system is composed of four proteins: P, T, L and H.

The enzyme catalyses N(6)-[(R)-S(8)-aminomethyldihydrolipoyl]-L-lysyl-[protein] + (6S)-5,6,7,8-tetrahydrofolate = N(6)-[(R)-dihydrolipoyl]-L-lysyl-[protein] + (6R)-5,10-methylene-5,6,7,8-tetrahydrofolate + NH4(+). In terms of biological role, the glycine cleavage system catalyzes the degradation of glycine. This Xylella fastidiosa (strain M12) protein is Aminomethyltransferase.